The sequence spans 372 residues: MNQGIDLQESFIKSLTDLGLSGGLAKAIWMPLPMFLMIIAATVGVLVCVWLERKISAAVQQRIGPEYAGPLGVLQPVADGLKLVFKEDVVPAKADPWLFLFGPILVVMPVFVSYLIVPFGQNLLITDLNVGIFLWISLSSIAPIGLLMAGYASNNKYSLLGGLRAAAQSISYEIPLALSVLAIVMMSNSLSTIDIVEQQSGYGILGWNIWRQPVGFLIFWIAALAECERLPFDLPEAEEELVAGYQTEYAGMKFALFYVGSYVNLVLSALVFAVLYLGGWEFPIPVNALAGWLGVSETNPWLQIITASLGITMTVLKAYFLIFIAILLRWTVPRVRIDQLLDLGWKFLLPVSLVNLLLTAALKLAFPFAFGG.

The next 8 helical transmembrane spans lie at 27-47 (AIWM…GVLV), 97-117 (WLFL…YLIV), 130-150 (VGIF…LMAG), 176-196 (LALS…IDIV), 204-224 (ILGW…IAAL), 254-274 (FALF…VFAV), 308-328 (SLGI…AILL), and 351-371 (VSLV…FAFG).

Belongs to the complex I subunit 1 family. In terms of assembly, NDH-1 is composed of at least 11 different subunits.

It is found in the cellular thylakoid membrane. The catalysed reaction is a plastoquinone + NADH + (n+1) H(+)(in) = a plastoquinol + NAD(+) + n H(+)(out). It carries out the reaction a plastoquinone + NADPH + (n+1) H(+)(in) = a plastoquinol + NADP(+) + n H(+)(out). Functionally, NDH-1 shuttles electrons from an unknown electron donor, via FMN and iron-sulfur (Fe-S) centers, to quinones in the respiratory and/or the photosynthetic chain. The immediate electron acceptor for the enzyme in this species is believed to be plastoquinone. Couples the redox reaction to proton translocation, and thus conserves the redox energy in a proton gradient. This is NAD(P)H-quinone oxidoreductase subunit 1 from Microcystis aeruginosa (strain NIES-843 / IAM M-2473).